Consider the following 344-residue polypeptide: Heat-inducible transcription repressor HrcA (344 aa).

The protein belongs to the HrcA family.

Functionally, negative regulator of class I heat shock genes (grpE-dnaK-dnaJ and groELS operons). Prevents heat-shock induction of these operons. The sequence is that of Heat-inducible transcription repressor HrcA from Streptococcus uberis (strain ATCC BAA-854 / 0140J).